A 1446-amino-acid chain; its full sequence is Toll-like receptor 7 (1446 aa).

Positions 1 to 16 (MAAILLLLLGFSWSLA) are cleaved as a signal peptide. Topologically, residues 17 to 1049 (VESALAPKES…QHGIPESYIP (1033 aa)) are extracellular. LRR repeat units lie at residues 133-156 (LQTLEALRLDSCKLLQLPNNAFEG), 158-180 (ATLKSLRLSTHNSEWGPTRTLEL), 188-211 (LKQLTDLDLGDNNLRQLPSGFLCP), 213-235 (GNLQVLNLTRNRIRTAEQMGFAD), 246-270 (GSELQVLDASHNELRSISESWGISR), 271-294 (LRRLQHLNLAYNNLSELSGEALAG), 295-318 (LASLRIVNLSNNHLETLPEGLFAG), 320-342 (KELREIHLQQNELYELPKGLFHR), 344-368 (EQLLVVDLSGNQLTSNHVDNTTFAG), 369-392 (LIRLIVLNLAHNALTRIDYRTFKE), 393-416 (LYFLQILNLRNNSIGHIEDNAFLP), 417-440 (LYNLHTLNLAENRLHTLDDKLFNG), 442-464 (YVLSKLTLNNNLISVVEPAVFKN), 465-488 (CSDLKELDLSSNQLNEVPRALQDL), 489-511 (AMLRTLDLGENQIRTFDNQSFKN), 513-535 (HQLTGLRLIDNQIGNITVGMFQD), 536-559 (LPRLSVLNLAKNRIQSIERGSFDK), 561-582 (FELEAIRLDRNFLADINGVFAT), 584-605 (VSLLWLNLSENHLVWFDYAFIP), 606-629 (SNLKWLDIHGNYIEALGNYYKLQE), 631-652 (IRVKTLDASHNRITEIGPMSIP), 653-675 (NTIELLFINNNLIGNVQPNAFVD), and 677-699 (ANLARVDLYANQLSKLQLQQLRV). Positions 716–773 (NPFECDCTMDWLQRINNLTTRQHPRVMDMANIECVMPHARGAAVRPLSGLRPQDFLCR) constitute an LRRCT domain. Disulfide bonds link Cys-722/Cys-772, Cys-796/Cys-802, and Cys-800/Cys-815. 6 LRR repeats span residues 828–851 (PMDSSVVYLDGNNFPVLKNHAFIG), 852–875 (RKNLRALYVNGSQVAAIQNRTFAS), 876–899 (LASLQLLHLADNKLRTLHGYEFEQ), 900–923 (LSALRELYLQNNQLTTIENATLAP), 925–947 (AALELIRIDGNRLVTLPIWQMHA), and 951–979 (GTRLKSISLGRNQWSCRCQFLQALTSYVA). A disulfide bridge links Cys-966 with Cys-993. The chain crosses the membrane as a helical span at residues 1050–1070 (LLAAALALLFLLVVIAMVFAF). The Cytoplasmic portion of the chain corresponds to 1071–1446 (RESLRIWLFA…QGPHVQAYLV (376 aa)). Positions 1096-1233 (KLYDAVLLHS…HFWEKLRYAL (138 aa)) constitute a TIR domain. Disordered regions lie at residues 1301-1332 (QNYSTATTATPSPRPQRRGEQPGSGSGGNHHL) and 1388-1446 (RPKR…AYLV). A compositionally biased stretch (polar residues) spans 1395 to 1413 (HLQQAQAGTLGSKASQAAH). Over residues 1414 to 1426 (QQQQQQQQQQQQQ) the composition is skewed to low complexity. Residues 1427–1439 (PNPTAVSGQQQGP) are compositionally biased toward polar residues.

It belongs to the Toll-like receptor family. As to expression, expressed in the fan-shaped body and the ellipsoid body, which are components of the locomotion center in the CNS (at protein level).

It is found in the cell membrane. Functionally, toll-related receptor which binds to the neurotrophins NT1 and spz5. Essential for antiviral autophagy, it detects and binds to the vesicular stomatitis virus (vsv) following infection. This role is likely to be independent of the canonical Toll, immune deficiency, and JAK-STAT signaling pathways. Functions in olfactory circuit assembly by promoting synaptic partner matching between olfactory receptor neurons (ORN) axons and projection neurons (PN) dendrites partners in the antennal lobe. Function in the Va1d ORNs is necessary and sufficient for correct targeting to their partner PN dendrites. Also involved in the targeting of other classes of ORN axons. Functions with Toll-6 to regulate motor axon targeting and neuronal survival in the central nervous system (CNS). May be an upstream component of the NF-kappa-B (rel) regulatory cascade. This Drosophila melanogaster (Fruit fly) protein is Toll-like receptor 7.